The primary structure comprises 202 residues: NAD(P)H-quinone oxidoreductase subunit I (202 aa).

2 4Fe-4S ferredoxin-type domains span residues 55–84 (GRIHYEFDKCIACEVCVRVCPINLPVVDWV) and 95–124 (KNYSIDFGACIFCGNCVEYCPTNCLSMTEE). [4Fe-4S] cluster is bound by residues cysteine 64, cysteine 67, cysteine 70, cysteine 74, cysteine 104, cysteine 107, cysteine 110, and cysteine 114. Residues 168-187 (EYDPHVVPSDRPRAGQRPEE) are compositionally biased toward basic and acidic residues. Residues 168-202 (EYDPHVVPSDRPRAGQRPEELVDQYKQAAAANEEN) are disordered.

It belongs to the complex I 23 kDa subunit family. As to quaternary structure, NDH-1 is composed of at least 11 different subunits. [4Fe-4S] cluster is required as a cofactor.

It is found in the cellular thylakoid membrane. The catalysed reaction is a plastoquinone + NADH + (n+1) H(+)(in) = a plastoquinol + NAD(+) + n H(+)(out). It carries out the reaction a plastoquinone + NADPH + (n+1) H(+)(in) = a plastoquinol + NADP(+) + n H(+)(out). Its function is as follows. NDH-1 shuttles electrons from an unknown electron donor, via FMN and iron-sulfur (Fe-S) centers, to quinones in the respiratory and/or the photosynthetic chain. The immediate electron acceptor for the enzyme in this species is believed to be plastoquinone. Couples the redox reaction to proton translocation, and thus conserves the redox energy in a proton gradient. This Synechococcus elongatus (strain ATCC 33912 / PCC 7942 / FACHB-805) (Anacystis nidulans R2) protein is NAD(P)H-quinone oxidoreductase subunit I.